A 203-amino-acid polypeptide reads, in one-letter code: Bone marrow stromal antigen 2 (203 aa).

Topologically, residues 1-26 (MAPTFYHYHPLPMDQKEPGCGIRWRC) are cytoplasmic. The chain crosses the membrane as a helical; Signal-anchor for type II membrane protein span at residues 27-47 (LAAASVLILVALVIPLIIFAV). Topologically, residues 48–183 (KANSEACRDG…EASITSKQNS (136 aa)) are extracellular. Asn66 and Asn93 each carry an N-linked (GlcNAc...) asparagine glycan. The stretch at 66-178 (NTTRLLQRQL…LRTAEEASIT (113 aa)) forms a coiled coil. Residue Ser183 is the site of GPI-anchor amidated serine attachment. The propeptide at 184 to 203 (AGSMAVSSLLVLAVPLFLLF) is removed in mature form.

Parallel homodimer; disulfide-linked. May form homotetramers under reducing conditions. Isoform 1 and isoform 2 form homodimers and also heterodimers with each other. Dimerization is essential for its antiviral activity. Interacts (via cytoplasmic domain) with ARHGAP44. Interacts with MMP14 (via C-terminal cytoplasmic tail). Interacts with LILRA4/ILT7. Interacts with RNF115. Post-translationally, the GPI anchor is essential for its antiviral activity.

The protein resides in the golgi apparatus. Its subcellular location is the trans-Golgi network. It localises to the cell membrane. The protein localises to the late endosome. It is found in the membrane raft. The protein resides in the cytoplasm. Its subcellular location is the apical cell membrane. Its function is as follows. IFN-induced antiviral host restriction factor which efficiently blocks the release of diverse mammalian enveloped viruses by directly tethering nascent virions to the membranes of infected cells. Acts as a direct physical tether, holding virions to the cell membrane and linking virions to each other. The tethered virions can be internalized by endocytosis and subsequently degraded or they can remain on the cell surface. In either case, their spread as cell-free virions is restricted. Its target viruses belong to diverse families, including retroviridae: human immunodeficiency virus type 1 (HIV-1), mouse mammary tumor virus (MMTV) and murine leukemia virus (MLV), filoviridae: ebola virus (EBOV), arenaviridae: lassa virus (LASV), and rhabdoviridae: vesicular stomatitis virus (VSV). Can inhibit cell surface proteolytic activity of MMP14 causing decreased activation of MMP15 which results in inhibition of cell growth and migration. Can stimulate signaling by LILRA4/ILT7 and consequently provide negative feedback to the production of IFN by plasmacytoid dendritic cells in response to viral infection. Plays a role in the organization of the subapical actin cytoskeleton in polarized epithelial cells. This is Bone marrow stromal antigen 2 (Bst2) from Cricetulus griseus (Chinese hamster).